The sequence spans 88 residues: Small ribosomal subunit protein bS20 (88 aa).

This sequence belongs to the bacterial ribosomal protein bS20 family.

In terms of biological role, binds directly to 16S ribosomal RNA. This chain is Small ribosomal subunit protein bS20, found in Methylorubrum extorquens (strain CM4 / NCIMB 13688) (Methylobacterium extorquens).